We begin with the raw amino-acid sequence, 186 residues long: Tegument protein UL55 (186 aa).

This sequence belongs to the alphaherpesvirinae HHV-1 UL55 family.

Its subcellular location is the virion tegument. The protein localises to the host nucleus matrix. The polypeptide is Tegument protein UL55 (Human herpesvirus 2 (strain HG52) (HHV-2)).